A 445-amino-acid polypeptide reads, in one-letter code: Trigger factor (445 aa).

The PPIase FKBP-type domain maps to 171 to 256; sequence NDIVIIDFKG…VHVVNEVETP (86 aa).

The protein belongs to the FKBP-type PPIase family. Tig subfamily.

It localises to the cytoplasm. The catalysed reaction is [protein]-peptidylproline (omega=180) = [protein]-peptidylproline (omega=0). Functionally, involved in protein export. Acts as a chaperone by maintaining the newly synthesized protein in an open conformation. Functions as a peptidyl-prolyl cis-trans isomerase. The sequence is that of Trigger factor from Malacoplasma penetrans (strain HF-2) (Mycoplasma penetrans).